Consider the following 305-residue polypeptide: tRNA dimethylallyltransferase (305 aa).

Residue 9 to 16 (GPTGAGKT) coordinates ATP. 11–16 (TGAGKT) provides a ligand contact to substrate. 2 interaction with substrate tRNA regions span residues 34–37 (DSRQ) and 158–162 (QRIVR).

The protein belongs to the IPP transferase family. In terms of assembly, monomer. Mg(2+) serves as cofactor.

It catalyses the reaction adenosine(37) in tRNA + dimethylallyl diphosphate = N(6)-dimethylallyladenosine(37) in tRNA + diphosphate. In terms of biological role, catalyzes the transfer of a dimethylallyl group onto the adenine at position 37 in tRNAs that read codons beginning with uridine, leading to the formation of N6-(dimethylallyl)adenosine (i(6)A). This Oleidesulfovibrio alaskensis (strain ATCC BAA-1058 / DSM 17464 / G20) (Desulfovibrio alaskensis) protein is tRNA dimethylallyltransferase.